The sequence spans 337 residues: DNA-directed RNA polymerase subunit alpha (337 aa).

The interval 1–233 (MVREEVAGST…DLFLPFLHTE (233 aa)) is alpha N-terminal domain (alpha-NTD). The segment at 267–337 (IPLNCIFIDQ…LPMDLPKNKF (71 aa)) is alpha C-terminal domain (alpha-CTD).

It belongs to the RNA polymerase alpha chain family. In plastids the minimal PEP RNA polymerase catalytic core is composed of four subunits: alpha, beta, beta', and beta''. When a (nuclear-encoded) sigma factor is associated with the core the holoenzyme is formed, which can initiate transcription.

The protein resides in the plastid. It is found in the chloroplast. The enzyme catalyses RNA(n) + a ribonucleoside 5'-triphosphate = RNA(n+1) + diphosphate. Its function is as follows. DNA-dependent RNA polymerase catalyzes the transcription of DNA into RNA using the four ribonucleoside triphosphates as substrates. The protein is DNA-directed RNA polymerase subunit alpha of Oryza nivara (Indian wild rice).